The following is a 99-amino-acid chain: Aspartyl/glutamyl-tRNA(Asn/Gln) amidotransferase subunit C (99 aa).

Belongs to the GatC family. As to quaternary structure, heterotrimer of A, B and C subunits.

The enzyme catalyses L-glutamyl-tRNA(Gln) + L-glutamine + ATP + H2O = L-glutaminyl-tRNA(Gln) + L-glutamate + ADP + phosphate + H(+). The catalysed reaction is L-aspartyl-tRNA(Asn) + L-glutamine + ATP + H2O = L-asparaginyl-tRNA(Asn) + L-glutamate + ADP + phosphate + 2 H(+). Its function is as follows. Allows the formation of correctly charged Asn-tRNA(Asn) or Gln-tRNA(Gln) through the transamidation of misacylated Asp-tRNA(Asn) or Glu-tRNA(Gln) in organisms which lack either or both of asparaginyl-tRNA or glutaminyl-tRNA synthetases. The reaction takes place in the presence of glutamine and ATP through an activated phospho-Asp-tRNA(Asn) or phospho-Glu-tRNA(Gln). The sequence is that of Aspartyl/glutamyl-tRNA(Asn/Gln) amidotransferase subunit C from Paraburkholderia phytofirmans (strain DSM 17436 / LMG 22146 / PsJN) (Burkholderia phytofirmans).